The chain runs to 297 residues: 4-hydroxy-tetrahydrodipicolinate synthase (297 aa).

Residue threonine 47 participates in pyruvate binding. The active-site Proton donor/acceptor is tyrosine 135. The active-site Schiff-base intermediate with substrate is the lysine 163. Pyruvate is bound at residue isoleucine 205.

Belongs to the DapA family. In terms of assembly, homotetramer; dimer of dimers.

It is found in the cytoplasm. It carries out the reaction L-aspartate 4-semialdehyde + pyruvate = (2S,4S)-4-hydroxy-2,3,4,5-tetrahydrodipicolinate + H2O + H(+). It participates in amino-acid biosynthesis; L-lysine biosynthesis via DAP pathway; (S)-tetrahydrodipicolinate from L-aspartate: step 3/4. In terms of biological role, catalyzes the condensation of (S)-aspartate-beta-semialdehyde [(S)-ASA] and pyruvate to 4-hydroxy-tetrahydrodipicolinate (HTPA). This is 4-hydroxy-tetrahydrodipicolinate synthase from Dehalococcoides mccartyi (strain ATCC BAA-2100 / JCM 16839 / KCTC 5957 / BAV1).